We begin with the raw amino-acid sequence, 529 residues long: Bifunctional purine biosynthesis protein PurH (529 aa).

The MGS-like domain maps to 1-148; the sequence is MQQRRPVRRA…KNHKDVAIVV (148 aa). Lys-287 is modified (N6-acetyllysine).

It belongs to the PurH family.

It catalyses the reaction (6R)-10-formyltetrahydrofolate + 5-amino-1-(5-phospho-beta-D-ribosyl)imidazole-4-carboxamide = 5-formamido-1-(5-phospho-D-ribosyl)imidazole-4-carboxamide + (6S)-5,6,7,8-tetrahydrofolate. It carries out the reaction IMP + H2O = 5-formamido-1-(5-phospho-D-ribosyl)imidazole-4-carboxamide. It participates in purine metabolism; IMP biosynthesis via de novo pathway; 5-formamido-1-(5-phospho-D-ribosyl)imidazole-4-carboxamide from 5-amino-1-(5-phospho-D-ribosyl)imidazole-4-carboxamide (10-formyl THF route): step 1/1. Its pathway is purine metabolism; IMP biosynthesis via de novo pathway; IMP from 5-formamido-1-(5-phospho-D-ribosyl)imidazole-4-carboxamide: step 1/1. This chain is Bifunctional purine biosynthesis protein PurH, found in Escherichia coli O45:K1 (strain S88 / ExPEC).